The chain runs to 258 residues: Transcription factor RSL3 (258 aa).

A D-box motif is present at residues 98–105 (RKLLDVEN). A disordered region spans residues 119-178 (ELAKSKKKQRVSSESNTVDESNTNWVDGQSLSNSSDDEKASVTSVKGKTRATKGTATDPQ). Positions 130-152 (SSESNTVDESNTNWVDGQSLSNS) are enriched in polar residues. Positions 173–186 (TATDPQSLYARKRR) are basic motif. A bHLH domain is found at 173–222 (TATDPQSLYARKRREKINERLKTLQNLVPNGTKVDISTMLEEAVHYVKFL). Residues 187-222 (EKINERLKTLQNLVPNGTKVDISTMLEEAVHYVKFL) form a helix-loop-helix motif region.

Homodimer. Post-translationally, ubiquitinated. Ubiquitination leads to its subsequent degradation by the 26S proteasome. In terms of tissue distribution, expressed constitutively in roots, leaves, and flowers. Expressed in root epidermal hair cells.

Its subcellular location is the nucleus. Functionally, transcription factor involved in the regulation of root hair elongation. Is sufficient to promote postmitotic cell growth in root-hair cells and is a direct transcriptional target of RHD6 and RSL1. Involved in the regulation of root hair elongation in response to low phosphate. Controls root hair cell growth by regulating the expression of genes encoding proteins involved in cell signaling, cell wall modification and secretion. In Arabidopsis thaliana (Mouse-ear cress), this protein is Transcription factor RSL3.